A 371-amino-acid polypeptide reads, in one-letter code: Probable L-aspartate decarboxylase (371 aa).

At lysine 232 the chain carries N6-(pyridoxal phosphate)lysine.

This sequence belongs to the group II decarboxylase family. MfnA subfamily. The cofactor is pyridoxal 5'-phosphate.

The enzyme catalyses L-aspartate + H(+) = beta-alanine + CO2. It participates in cofactor biosynthesis; coenzyme A biosynthesis. In terms of biological role, catalyzes the decarboxylation of L-aspartate to produce beta-alanine. The sequence is that of Probable L-aspartate decarboxylase from Pyrococcus furiosus (strain ATCC 43587 / DSM 3638 / JCM 8422 / Vc1).